Here is a 229-residue protein sequence, read N- to C-terminus: Cytochrome c oxidase subunit 2 (229 aa).

The Mitochondrial intermembrane segment spans residues 1 to 26 (MSTWANLGLQDSASPLMEQLIFFHDH). A helical transmembrane segment spans residues 27 to 48 (ALLILVMITVLVGYLMVMLFFN). The Mitochondrial matrix portion of the chain corresponds to 49–62 (SYVNRFLLHGQLIE). Residues 63–82 (MIWTILPAIILLFIAMPSLR) traverse the membrane as a helical segment. At 83 to 229 (LLYLLDEINE…IKWISDKVNS (147 aa)) the chain is on the mitochondrial intermembrane side. The Cu cation site is built by His-161, Cys-196, Glu-198, Cys-200, His-204, and Met-207. Glu-198 contacts Mg(2+).

The protein belongs to the cytochrome c oxidase subunit 2 family. In terms of assembly, component of the cytochrome c oxidase (complex IV, CIV), a multisubunit enzyme composed of a catalytic core of 3 subunits and several supernumerary subunits. The complex exists as a monomer or a dimer and forms supercomplexes (SCs) in the inner mitochondrial membrane with ubiquinol-cytochrome c oxidoreductase (cytochrome b-c1 complex, complex III, CIII). Cu cation serves as cofactor.

It localises to the mitochondrion inner membrane. The catalysed reaction is 4 Fe(II)-[cytochrome c] + O2 + 8 H(+)(in) = 4 Fe(III)-[cytochrome c] + 2 H2O + 4 H(+)(out). Component of the cytochrome c oxidase, the last enzyme in the mitochondrial electron transport chain which drives oxidative phosphorylation. The respiratory chain contains 3 multisubunit complexes succinate dehydrogenase (complex II, CII), ubiquinol-cytochrome c oxidoreductase (cytochrome b-c1 complex, complex III, CIII) and cytochrome c oxidase (complex IV, CIV), that cooperate to transfer electrons derived from NADH and succinate to molecular oxygen, creating an electrochemical gradient over the inner membrane that drives transmembrane transport and the ATP synthase. Cytochrome c oxidase is the component of the respiratory chain that catalyzes the reduction of oxygen to water. Electrons originating from reduced cytochrome c in the intermembrane space (IMS) are transferred via the dinuclear copper A center (CU(A)) of subunit 2 and heme A of subunit 1 to the active site in subunit 1, a binuclear center (BNC) formed by heme A3 and copper B (CU(B)). The BNC reduces molecular oxygen to 2 water molecules using 4 electrons from cytochrome c in the IMS and 4 protons from the mitochondrial matrix. The protein is Cytochrome c oxidase subunit 2 (mt:CoII) of Drosophila subobscura (Fruit fly).